The sequence spans 347 residues: MKQTIILLYGGRSAEREVSVLSAESVMRAVNYDRFTVKTFFISQSGDFIKTQEFSHAPGQEDRLMTNETIDWDKKVAPSAIYEEGAVVFPVLHGPMGEDGSVQGFLEVLKMPYVGCNILSSSLAMDKITTKRVLESAGIAQVPYVAIVEGDDVTAKIAEVEEKLAYPVFTKPSNMGSSVGISKSENQEELRQALKLAFRYDSRVLVEQGVNAREIEVGLLGNYDVKSTLPGEVVKDVAFYDYDAKYIDNKITMDIPAKISDDVVAVMRQNAETAFRAIGGLGLSRCDFFYTDKGEIFLNELNTMPGFTQWSMYPLLWDNMGISYPELIERLVDLAKESFDKREAHLI.

Residues Lys-131–Asp-333 form the ATP-grasp domain. Glu-161–Glu-216 lines the ATP pocket. 3 residues coordinate Mg(2+): Asp-287, Glu-300, and Asn-302.

The protein belongs to the D-alanine--D-alanine ligase family. The cofactor is Mg(2+). Mn(2+) serves as cofactor.

It localises to the cytoplasm. The enzyme catalyses 2 D-alanine + ATP = D-alanyl-D-alanine + ADP + phosphate + H(+). It functions in the pathway cell wall biogenesis; peptidoglycan biosynthesis. Cell wall formation. The protein is D-alanine--D-alanine ligase of Streptococcus pneumoniae serotype 19F (strain G54).